Here is a 109-residue protein sequence, read N- to C-terminus: UPF0449 protein C19orf25 homolog (109 aa).

A Phosphotyrosine modification is found at tyrosine 63.

Belongs to the UPF0449 family.

This is UPF0449 protein C19orf25 homolog from Rattus norvegicus (Rat).